Reading from the N-terminus, the 119-residue chain is Large ribosomal subunit protein uL18 (119 aa).

The protein belongs to the universal ribosomal protein uL18 family. As to quaternary structure, part of the 50S ribosomal subunit; part of the 5S rRNA/L5/L18/L25 subcomplex. Contacts the 5S and 23S rRNAs.

Functionally, this is one of the proteins that bind and probably mediate the attachment of the 5S RNA into the large ribosomal subunit, where it forms part of the central protuberance. This chain is Large ribosomal subunit protein uL18, found in Nitratidesulfovibrio vulgaris (strain DSM 19637 / Miyazaki F) (Desulfovibrio vulgaris).